Reading from the N-terminus, the 640-residue chain is Threonine--tRNA ligase (640 aa).

A TGS domain is found at 1–61 (MPVITLPDGS…SNDATLQIIT (61 aa)). The tract at residues 242–533 (DHRKIGKQLD…LIEHYAGVFP (292 aa)) is catalytic. Positions 333, 384, and 510 each coordinate Zn(2+).

It belongs to the class-II aminoacyl-tRNA synthetase family. As to quaternary structure, homodimer. Zn(2+) serves as cofactor.

It is found in the cytoplasm. The catalysed reaction is tRNA(Thr) + L-threonine + ATP = L-threonyl-tRNA(Thr) + AMP + diphosphate + H(+). In terms of biological role, catalyzes the attachment of threonine to tRNA(Thr) in a two-step reaction: L-threonine is first activated by ATP to form Thr-AMP and then transferred to the acceptor end of tRNA(Thr). Also edits incorrectly charged L-seryl-tRNA(Thr). This is Threonine--tRNA ligase from Pseudomonas putida (strain GB-1).